The sequence spans 282 residues: NADPH-dependent 7-cyano-7-deazaguanine reductase (282 aa).

88-90 is a binding site for substrate; that stretch reads IES. An NADPH-binding site is contributed by 90-91; the sequence is SK. Catalysis depends on cysteine 190, which acts as the Thioimide intermediate. The Proton donor role is filled by aspartate 197. Residue 229 to 230 coordinates substrate; it reads HE. An NADPH-binding site is contributed by 258 to 259; that stretch reads RG.

This sequence belongs to the GTP cyclohydrolase I family. QueF type 2 subfamily. As to quaternary structure, homodimer.

The protein localises to the cytoplasm. The catalysed reaction is 7-aminomethyl-7-carbaguanine + 2 NADP(+) = 7-cyano-7-deazaguanine + 2 NADPH + 3 H(+). The protein operates within tRNA modification; tRNA-queuosine biosynthesis. Its function is as follows. Catalyzes the NADPH-dependent reduction of 7-cyano-7-deazaguanine (preQ0) to 7-aminomethyl-7-deazaguanine (preQ1). This is NADPH-dependent 7-cyano-7-deazaguanine reductase from Escherichia coli O17:K52:H18 (strain UMN026 / ExPEC).